A 378-amino-acid chain; its full sequence is Quinolinate synthase (378 aa).

Positions 59 and 80 each coordinate iminosuccinate. Cysteine 125 is a binding site for [4Fe-4S] cluster. Iminosuccinate is bound by residues 151–153 (YAN) and serine 168. Cysteine 212 contributes to the [4Fe-4S] cluster binding site. Iminosuccinate is bound by residues 238–240 (HPE) and threonine 255. Cysteine 309 provides a ligand contact to [4Fe-4S] cluster.

It belongs to the quinolinate synthase family. Type 1 subfamily. [4Fe-4S] cluster is required as a cofactor.

The protein localises to the cytoplasm. The catalysed reaction is iminosuccinate + dihydroxyacetone phosphate = quinolinate + phosphate + 2 H2O + H(+). The protein operates within cofactor biosynthesis; NAD(+) biosynthesis; quinolinate from iminoaspartate: step 1/1. In terms of biological role, catalyzes the condensation of iminoaspartate with dihydroxyacetone phosphate to form quinolinate. This is Quinolinate synthase from Burkholderia thailandensis (strain ATCC 700388 / DSM 13276 / CCUG 48851 / CIP 106301 / E264).